Here is a 252-residue protein sequence, read N- to C-terminus: Phosphoribosylaminoimidazole-succinocarboxamide synthase 1 (252 aa).

Belongs to the SAICAR synthetase family.

The enzyme catalyses 5-amino-1-(5-phospho-D-ribosyl)imidazole-4-carboxylate + L-aspartate + ATP = (2S)-2-[5-amino-1-(5-phospho-beta-D-ribosyl)imidazole-4-carboxamido]succinate + ADP + phosphate + 2 H(+). Its pathway is purine metabolism; IMP biosynthesis via de novo pathway; 5-amino-1-(5-phospho-D-ribosyl)imidazole-4-carboxamide from 5-amino-1-(5-phospho-D-ribosyl)imidazole-4-carboxylate: step 1/2. This Caulobacter vibrioides (strain ATCC 19089 / CIP 103742 / CB 15) (Caulobacter crescentus) protein is Phosphoribosylaminoimidazole-succinocarboxamide synthase 1 (purC1).